Here is a 113-residue protein sequence, read N- to C-terminus: MEDFQASEETAFVVDEVSNIVKEAIESAIGGNAYQHSKVNQWTTNVVEQTLSQLTKLGKPFKYIVTCVIMQKNGAGLHTASSCFWDSSTDGSCTVRWENKTMYCIVSAFGLSI.

The residue at position 1 (M1) is an N-acetylmethionine. Positions 41–113 (QWTTNVVEQT…CIVSAFGLSI (73 aa)) are interaction with GNB1.

The protein belongs to the dynein light chain Tctex-type family. As to quaternary structure, homodimer. The cytoplasmic dynein 1 complex consists of two catalytic heavy chains (HCs) and a number of non-catalytic subunits presented by intermediate chains (ICs), light intermediate chains (LICs) and light chains (LCs); the composition seems to vary in respect to the IC, LIC and LC composition. The heavy chain homodimer serves as a scaffold for the probable homodimeric assembly of the respective non-catalytic subunits. The ICs and LICs bind directly to the HC dimer and dynein LCs assemble on the IC dimer. DYNLT1 and DYNLT3 compete for association with dynein IC (DYNC1I1 or DYNC1I2). Self-associates. Interacts with RHO. Interacts with DYNC1I1 and DYNC1I2. Interacts with DOC2A, DOC2B and SCN10A. Interacts with PVR. Interacts with SVIL isoform 2. Interacts with GNB1; the interaction occurs in presence of guanine nucleotide-binding protein G(T) subunit gamma; the interaction diminishes the association of DYNLT1 with dynein IC (DYNC1I1 or DYNC1I2). Interacts with GNB2, GNB3 and GNB5; the interactions occur in presence of guanine nucleotide-binding protein G(T) subunit gamma. Interacts with ACVR2B and ARHGEF2. Interacts with DNAI4. Interacts with CFAP61. In terms of processing, phosphorylated by BMPR2. The phosphorylation status is proposed to regulate the association with the cytoplasmic dynein complex and may have role in cytoplasmic dynein cargo release.

It is found in the golgi apparatus. The protein localises to the cytoplasm. The protein resides in the cytoskeleton. Its subcellular location is the spindle. In terms of biological role, acts as one of several non-catalytic accessory components of the cytoplasmic dynein 1 complex that are thought to be involved in linking dynein to cargos and to adapter proteins that regulate dynein function. Cytoplasmic dynein 1 acts as a motor for the intracellular retrograde motility of vesicles and organelles along microtubules. Binds to transport cargos and is involved in apical cargo transport such as rhodopsin-bearing vesicles in polarized epithelia. Is involved in intracellular targeting of D-type retrovirus gag polyproteins to the cytoplasmic assembly site. May also be a accessory component of axonemal dynein. Its function is as follows. Plays a role in neuronal morphogenesis; the function is independent of cytoplasmic dynein and seems to be coupled to regulation of the actin cytoskeleton by enhancing Rac1 activity. Required for neurite outgrowth. The function in neurogenesis may be regulated by association with a G-protein beta-gamma dimer. May function as a receptor-independent activator of heterotrimeric G-protein signaling; the activation appears to be independent of a nucleotide exchange. Plays a role in regulating neurogenesis; inhibits the genesis of neurons from precursor cells during cortical development presumably by antagonizing ARHGEF2. Unrelated to the role in retrograde microtubule-associated movement may play a role in the dimerization of cytoplasmic proteins/domains such as for ACVR2B. Binds to the cytoplasmic domain of ACVR2B and, in vitro, inhibits ACVR2B signaling. Involved in the regulation of mitotic spindle orientation. The sequence is that of Dynein light chain Tctex-type 1 (Dynlt1) from Rattus norvegicus (Rat).